Consider the following 519-residue polypeptide: 2-isopropylmalate synthase (519 aa).

The Pyruvate carboxyltransferase domain maps to 5–267; that stretch reads VIIFDTTLRD…YTNIHHHEIY (263 aa). Mn(2+) is bound by residues Asp14, His202, His204, and Asn238. Residues 392–519 form a regulatory domain region; sequence ALESFHIHST…NHKNTQHIKK (128 aa).

Belongs to the alpha-IPM synthase/homocitrate synthase family. LeuA type 1 subfamily. Homodimer. Mn(2+) serves as cofactor.

The protein localises to the cytoplasm. It catalyses the reaction 3-methyl-2-oxobutanoate + acetyl-CoA + H2O = (2S)-2-isopropylmalate + CoA + H(+). The protein operates within amino-acid biosynthesis; L-leucine biosynthesis; L-leucine from 3-methyl-2-oxobutanoate: step 1/4. Catalyzes the condensation of the acetyl group of acetyl-CoA with 3-methyl-2-oxobutanoate (2-ketoisovalerate) to form 3-carboxy-3-hydroxy-4-methylpentanoate (2-isopropylmalate). The sequence is that of 2-isopropylmalate synthase from Blochmanniella floridana.